The following is a 60-amino-acid chain: Metallothionein A (60 aa).

The interval 1–28 is beta; it reads MDPCECSKTGKCNCGTSCTCTNCSCKCC. Positions 4, 6, 12, 14, 18, 20, 23, 25, 28, 32, 33, 35, 36, 40, 43, 47, 49, 54, 58, and 59 each coordinate a divalent metal cation. Residues 29 to 60 form an alpha region; sequence KKSCCSCCPSGCSKCASGCVCKGNSCDKSCCQ.

It belongs to the metallothionein superfamily. Type 1 family.

Functionally, metallothioneins have a high content of cysteine residues that bind various heavy metals. The chain is Metallothionein A (mta) from Cyprinodon sp. (Pupfish).